Reading from the N-terminus, the 232-residue chain is 2-C-methyl-D-erythritol 4-phosphate cytidylyltransferase (232 aa).

The protein belongs to the IspD/TarI cytidylyltransferase family. IspD subfamily.

It catalyses the reaction 2-C-methyl-D-erythritol 4-phosphate + CTP + H(+) = 4-CDP-2-C-methyl-D-erythritol + diphosphate. Its pathway is isoprenoid biosynthesis; isopentenyl diphosphate biosynthesis via DXP pathway; isopentenyl diphosphate from 1-deoxy-D-xylulose 5-phosphate: step 2/6. Catalyzes the formation of 4-diphosphocytidyl-2-C-methyl-D-erythritol from CTP and 2-C-methyl-D-erythritol 4-phosphate (MEP). The sequence is that of 2-C-methyl-D-erythritol 4-phosphate cytidylyltransferase from Stenotrophomonas maltophilia (strain K279a).